A 383-amino-acid polypeptide reads, in one-letter code: Ovalbumin (383 aa).

Glycine 2 is modified (N-acetylglycine). A signal peptide (not cleaved) is located at residues 22–48 (HHANDNMLYSPFAILSTLAMVFLGAKD). Serine 69 carries the phosphoserine modification. Residues cysteine 74 and cysteine 121 are joined by a disulfide bond. N-linked (GlcNAc...) asparagine glycosylation is found at asparagine 293 and asparagine 312. The residue at position 345 (serine 345) is a Phosphoserine.

It belongs to the serpin family. Ov-serpin subfamily. Post-translationally, the signal sequence is not cleaved. The functional signal for membrane translocation of ovalbumin becomes accessible when the nascent chain is 50 to 60 residues long. The hydrophobic sequence which lies between residues 27 and 43 folds back on the preceding residues to form an amphipathic hairpin structure which is the signal element recognized by the membrane. As to expression, major protein of egg white.

The protein resides in the secreted. In terms of biological role, storage protein of egg white. Lack protease inhibitory activity. This is Ovalbumin (SERPINB14) from Coturnix japonica (Japanese quail).